The following is a 335-amino-acid chain: DNA-directed RNA polymerase subunit alpha (335 aa).

The interval 1–233 is alpha N-terminal domain (alpha-NTD); that stretch reads MIRDKISVSI…DLFIPFLHGE (233 aa). Residues 264–335 form an alpha C-terminal domain (alpha-CTD) region; the sequence is KEKIAFKHIF…KRFAIDPPRN (72 aa).

Belongs to the RNA polymerase alpha chain family. As to quaternary structure, in plastids the minimal PEP RNA polymerase catalytic core is composed of four subunits: alpha, beta, beta', and beta''. When a (nuclear-encoded) sigma factor is associated with the core the holoenzyme is formed, which can initiate transcription.

It localises to the plastid. It is found in the chloroplast. The enzyme catalyses RNA(n) + a ribonucleoside 5'-triphosphate = RNA(n+1) + diphosphate. In terms of biological role, DNA-dependent RNA polymerase catalyzes the transcription of DNA into RNA using the four ribonucleoside triphosphates as substrates. The protein is DNA-directed RNA polymerase subunit alpha of Pinus koraiensis (Korean pine).